We begin with the raw amino-acid sequence, 90 residues long: Conotoxin Ca8.2 (90 aa).

The N-terminal stretch at 1-21 is a signal peptide; that stretch reads MMLKMGAMFVLLLLFILPSSQ. The propeptide occupies 22 to 46; that stretch reads QEGDVQARKTHLKRGFYGTLAMSTR. At Q89 the chain carries Glutamine amide.

The protein belongs to the conotoxin S superfamily. In terms of processing, contains 5 disulfide bonds. In terms of tissue distribution, expressed by the venom duct.

Its subcellular location is the secreted. This chain is Conotoxin Ca8.2, found in Conus caracteristicus (Characteristic cone).